The sequence spans 462 residues: Argininosuccinate lyase (462 aa).

Belongs to the lyase 1 family. Argininosuccinate lyase subfamily.

It is found in the cytoplasm. It catalyses the reaction 2-(N(omega)-L-arginino)succinate = fumarate + L-arginine. The protein operates within amino-acid biosynthesis; L-arginine biosynthesis; L-arginine from L-ornithine and carbamoyl phosphate: step 3/3. The polypeptide is Argininosuccinate lyase (Bacillus thuringiensis (strain Al Hakam)).